A 212-amino-acid polypeptide reads, in one-letter code: Thiamine-phosphate synthase (212 aa).

Residues 40-44 and Asn-75 contribute to the 4-amino-2-methyl-5-(diphosphooxymethyl)pyrimidine site; that span reads QFREK. Asp-76 and Asp-95 together coordinate Mg(2+). Ser-113 provides a ligand contact to 4-amino-2-methyl-5-(diphosphooxymethyl)pyrimidine. 139 to 141 lines the 2-[(2R,5Z)-2-carboxy-4-methylthiazol-5(2H)-ylidene]ethyl phosphate pocket; that stretch reads TSS. Residue Lys-142 coordinates 4-amino-2-methyl-5-(diphosphooxymethyl)pyrimidine. 2-[(2R,5Z)-2-carboxy-4-methylthiazol-5(2H)-ylidene]ethyl phosphate is bound by residues Gly-171 and 191–192; that span reads IS.

It belongs to the thiamine-phosphate synthase family. It depends on Mg(2+) as a cofactor.

It carries out the reaction 2-[(2R,5Z)-2-carboxy-4-methylthiazol-5(2H)-ylidene]ethyl phosphate + 4-amino-2-methyl-5-(diphosphooxymethyl)pyrimidine + 2 H(+) = thiamine phosphate + CO2 + diphosphate. The enzyme catalyses 2-(2-carboxy-4-methylthiazol-5-yl)ethyl phosphate + 4-amino-2-methyl-5-(diphosphooxymethyl)pyrimidine + 2 H(+) = thiamine phosphate + CO2 + diphosphate. It catalyses the reaction 4-methyl-5-(2-phosphooxyethyl)-thiazole + 4-amino-2-methyl-5-(diphosphooxymethyl)pyrimidine + H(+) = thiamine phosphate + diphosphate. Its pathway is cofactor biosynthesis; thiamine diphosphate biosynthesis; thiamine phosphate from 4-amino-2-methyl-5-diphosphomethylpyrimidine and 4-methyl-5-(2-phosphoethyl)-thiazole: step 1/1. Condenses 4-methyl-5-(beta-hydroxyethyl)thiazole monophosphate (THZ-P) and 2-methyl-4-amino-5-hydroxymethyl pyrimidine pyrophosphate (HMP-PP) to form thiamine monophosphate (TMP). In Staphylococcus epidermidis (strain ATCC 35984 / DSM 28319 / BCRC 17069 / CCUG 31568 / BM 3577 / RP62A), this protein is Thiamine-phosphate synthase.